The chain runs to 644 residues: MKVSIEGSVVEVESGASCRDVLKQALSGKKFKKVLAARCGGTMLDLTATVPTACETLEPVYADSPEGLGLIRHSAAHVMADAVQRLFPGVKVTIGPAIENGFYYDFDYERPFTADDLEAIEAEMDKIIKAAHPFERSVMSKDEAKKMFADMGETYKLELIDAVPDDIVSIYRSGDFVDLCRGPHIPDTGCINAFKLMSVAGAYWRGDEKNAMLSRVYGTAFPDEKELKSYLNRIEEAKKRDHRKLGTQLDLFSFQEEGGSGMVYWHPKGALVRAILEDFERKEHLKRGYQIVQTPQILRRELWEKSGHYDNYRENMYFTDIDEQPYGVKPMNCVAHMLIYKSRSHSYRDLPVRLFELGVVHRHEKSGVLHGLLRVRQFTQDDAHIICTPDQLESEIVGVLNFVRDVMGVFGFEYSMEVSTRPEKSIGSDEDWDRATSALVKALEGQGLPYEINEGDGAFYGPKIDVKLRDCLGREWQCATVQCDFTLPDRFDLVYIGQDGERHRPVMVHRVILGSVERFIGVLTEHFAGAFPTWLAPVQARLLTVTDAQNEFAEEARAALMAQGIRVEVDTRNEKLGYKVREAQLEKIPYILVIGDKEVEARGVNVRLRKGDNLGLKTLDEVVDIIRADCEEPFKSGGMRYSFS.

A TGS domain is found at 1 to 61 (MKVSIEGSVV…TACETLEPVY (61 aa)). Residues 241–532 (DHRKLGTQLD…LTEHFAGAFP (292 aa)) form a catalytic region. The Zn(2+) site is built by C333, H384, and H509.

Belongs to the class-II aminoacyl-tRNA synthetase family. As to quaternary structure, homodimer. Zn(2+) is required as a cofactor.

It is found in the cytoplasm. It catalyses the reaction tRNA(Thr) + L-threonine + ATP = L-threonyl-tRNA(Thr) + AMP + diphosphate + H(+). Functionally, catalyzes the attachment of threonine to tRNA(Thr) in a two-step reaction: L-threonine is first activated by ATP to form Thr-AMP and then transferred to the acceptor end of tRNA(Thr). Also edits incorrectly charged L-seryl-tRNA(Thr). This Oleidesulfovibrio alaskensis (strain ATCC BAA-1058 / DSM 17464 / G20) (Desulfovibrio alaskensis) protein is Threonine--tRNA ligase.